The primary structure comprises 591 residues: Serine/threonine-protein kinase Nek2 (591 aa).

The Protein kinase domain occupies Y4–L258. ATP contacts are provided by residues I10–A18 and K33. Catalysis depends on D129, which acts as the Proton acceptor. Disordered stretches follow at residues L309–R331, A382–N408, and R500–S534. Composition is skewed to polar residues over residues T391–N408 and D504–S534.

It belongs to the protein kinase superfamily. NEK Ser/Thr protein kinase family. NIMA subfamily. In terms of tissue distribution, expressed in anthers, pistils and leaves.

The catalysed reaction is L-seryl-[protein] + ATP = O-phospho-L-seryl-[protein] + ADP + H(+). The enzyme catalyses L-threonyl-[protein] + ATP = O-phospho-L-threonyl-[protein] + ADP + H(+). May be involved in plant development processes. This Oryza sativa subsp. japonica (Rice) protein is Serine/threonine-protein kinase Nek2.